The primary structure comprises 512 residues: 2,3-bisphosphoglycerate-independent phosphoglycerate mutase (512 aa).

Mn(2+)-binding residues include D14 and S64. S64 acts as the Phosphoserine intermediate in catalysis. Substrate is bound by residues H125, 155-156 (RD), R187, R193, 259-262 (RADR), and K332. D399, H403, D440, H441, and H459 together coordinate Mn(2+).

It belongs to the BPG-independent phosphoglycerate mutase family. Monomer. It depends on Mn(2+) as a cofactor.

The catalysed reaction is (2R)-2-phosphoglycerate = (2R)-3-phosphoglycerate. It functions in the pathway carbohydrate degradation; glycolysis; pyruvate from D-glyceraldehyde 3-phosphate: step 3/5. In terms of biological role, catalyzes the interconversion of 2-phosphoglycerate and 3-phosphoglycerate. The chain is 2,3-bisphosphoglycerate-independent phosphoglycerate mutase from Vesicomyosocius okutanii subsp. Calyptogena okutanii (strain HA).